Reading from the N-terminus, the 299-residue chain is tRNA dimethylallyltransferase (299 aa).

11-18 (GPTGSGKS) contributes to the ATP binding site. 13–18 (TGSGKS) provides a ligand contact to substrate.

The protein belongs to the IPP transferase family. As to quaternary structure, monomer. Mg(2+) serves as cofactor.

The enzyme catalyses adenosine(37) in tRNA + dimethylallyl diphosphate = N(6)-dimethylallyladenosine(37) in tRNA + diphosphate. Catalyzes the transfer of a dimethylallyl group onto the adenine at position 37 in tRNAs that read codons beginning with uridine, leading to the formation of N6-(dimethylallyl)adenosine (i(6)A). The protein is tRNA dimethylallyltransferase of Pseudarthrobacter chlorophenolicus (strain ATCC 700700 / DSM 12829 / CIP 107037 / JCM 12360 / KCTC 9906 / NCIMB 13794 / A6) (Arthrobacter chlorophenolicus).